A 911-amino-acid chain; its full sequence is Protein dead ringer (911 aa).

Disordered stretches follow at residues 1-44 (MQLR…DCDS), 67-87 (SGGG…LSHH), and 172-274 (HVTS…QNNG). Residues 19–34 (IERDSDLGDDLSHGDR) show a composition bias toward basic and acidic residues. Ser-30 carries the post-translational modification Phosphoserine. Thr-35 is subject to Phosphothreonine. At Ser-44 the chain carries Phosphoserine. The span at 174–201 (TSSPSGGNGSSYNGGTTPTNSSNSNATT) shows a compositional bias: low complexity. Over residues 202 to 231 (NGGGTAGPGGTGGSGGGGGGGGGGGGGVGG) the composition is skewed to gly residues. Residues 252–273 (AANSASNSSTSSEASNSSQQNN) show a composition bias toward low complexity. One can recognise an ARID domain in the interval 293–385 (DPKRKEFLDD…YLYPYECEKK (93 aa)). Disordered stretches follow at residues 501-633 (GMPP…VGSG), 662-775 (PSMG…GKLN), and 826-877 (QSET…DQDM). Over residues 512–550 (HQQQHSQQQQQQQHHHQQQQQQQSQQQHHLQQQRQRSQS) the composition is skewed to low complexity. Over residues 570 to 600 (HNNNSPPGSAHTSPQQREALNLSDSPPNLTN) the composition is skewed to polar residues. A phosphoserine mark is found at Ser-592 and Ser-594. Residues 601–621 (IKREREREPTPEPVDQDDKFV) are compositionally biased toward basic and acidic residues. Residue Ser-720 is modified to Phosphoserine. Positions 731 to 825 (TTGGSVGHRH…GVLVANVPLS (95 aa)) constitute an REKLES domain. A compositionally biased stretch (basic residues) spans 737–751 (GHRHSSPVSTKKKGG). The segment covering 841–853 (TVEEEKDEEEEEE) has biased composition (acidic residues). Residues 854–870 (PKAAEEESHRSPVKQEN) are compositionally biased toward basic and acidic residues.

As to expression, present in the pharyngeal muscles, hindgut epithelium, amnioserosa, ring gland, midgut-hindgut junction, posterior region of each brain lobe, longitudinal glial cells of the CNS and the salivary gland duct of germ-band retracted embryos.

The protein resides in the nucleus. Functionally, transcription factor which is a downstream target of gcm and repo. Directly or indirectly activates the transcription of locos and pros, which are essential for the development of some glial cells. Plays an essential role in defining the cell shape and migration characteristics of longitudinal glia that enable them to establish a normal axon scaffold. This Drosophila melanogaster (Fruit fly) protein is Protein dead ringer (retn).